We begin with the raw amino-acid sequence, 328 residues long: UPF0104 membrane protein AF_2231 (328 aa).

The next 6 membrane-spanning stretches (helical) occupy residues 31–51, 116–136, 139–159, 221–241, 245–265, and 277–297; these read NWLLLIVAFLLQVSFWLLWAL, ILDSMYFSTALPVFLIVTGFS, FGFKIAIIFITLLLVFLYILY, LVTLVMWSASFAIPSVILVAL, AYFLYSYTAQLIIVIVSLVPL, and MAYLYSNFVPTNVLGVLVGLW.

Belongs to the UPF0104 family.

It is found in the cell membrane. This Archaeoglobus fulgidus (strain ATCC 49558 / DSM 4304 / JCM 9628 / NBRC 100126 / VC-16) protein is UPF0104 membrane protein AF_2231.